Reading from the N-terminus, the 175-residue chain is NADH-quinone oxidoreductase subunit I (175 aa).

2 4Fe-4S ferredoxin-type domains span residues 69–98 (KRDEQGRERCTSCFCCMWICPADAIYIEAG) and 115–144 (KKFEIDLLRCIFCGMCEEACPKGAIYLDGP). Residues C78, C81, C84, C88, C124, C127, C130, and C134 each coordinate [4Fe-4S] cluster.

It belongs to the complex I 23 kDa subunit family. As to quaternary structure, NDH-1 is composed of 14 different subunits. Subunits NuoA, H, J, K, L, M, N constitute the membrane sector of the complex. [4Fe-4S] cluster is required as a cofactor.

It is found in the cell inner membrane. It catalyses the reaction a quinone + NADH + 5 H(+)(in) = a quinol + NAD(+) + 4 H(+)(out). NDH-1 shuttles electrons from NADH, via FMN and iron-sulfur (Fe-S) centers, to quinones in the respiratory chain. The immediate electron acceptor for the enzyme in this species is believed to be ubiquinone. Couples the redox reaction to proton translocation (for every two electrons transferred, four hydrogen ions are translocated across the cytoplasmic membrane), and thus conserves the redox energy in a proton gradient. The polypeptide is NADH-quinone oxidoreductase subunit I (Leptospira borgpetersenii serovar Hardjo-bovis (strain JB197)).